A 130-amino-acid chain; its full sequence is Cyclin-dependent kinase 4 inhibitor B (130 aa).

4 ANK repeats span residues Ser5–Ala34, Phe38–Cys66, Thr71–Val100, and Trp104–Asp130. The residue at position 12 (Thr12) is a Phosphothreonine.

The protein belongs to the CDKN2 cyclin-dependent kinase inhibitor family. Heterodimer of CDKN2B with CDK4 or CDK6. Expressed ubiquitously.

In terms of biological role, interacts strongly with CDK4 and CDK6. Potent inhibitor. Potential effector of TGF-beta induced cell cycle arrest. The polypeptide is Cyclin-dependent kinase 4 inhibitor B (Cdkn2b) (Mus musculus (Mouse)).